The primary structure comprises 429 residues: Enolase (429 aa).

Glutamine 168 is a (2R)-2-phosphoglycerate binding site. The active-site Proton donor is the glutamate 210. Mg(2+) is bound by residues aspartate 247, glutamate 288, and aspartate 315. Positions 340, 369, 370, and 391 each coordinate (2R)-2-phosphoglycerate. Lysine 340 serves as the catalytic Proton acceptor.

It belongs to the enolase family. It depends on Mg(2+) as a cofactor.

Its subcellular location is the cytoplasm. The protein localises to the secreted. The protein resides in the cell surface. The catalysed reaction is (2R)-2-phosphoglycerate = phosphoenolpyruvate + H2O. The protein operates within carbohydrate degradation; glycolysis; pyruvate from D-glyceraldehyde 3-phosphate: step 4/5. Its function is as follows. Catalyzes the reversible conversion of 2-phosphoglycerate (2-PG) into phosphoenolpyruvate (PEP). It is essential for the degradation of carbohydrates via glycolysis. This Trichormus variabilis (strain ATCC 29413 / PCC 7937) (Anabaena variabilis) protein is Enolase.